Consider the following 265-residue polypeptide: Undecaprenyl-diphosphatase (265 aa).

The next 8 membrane-spanning stretches (helical) occupy residues 1–21, 39–59, 83–103, 114–134, 144–164, 188–208, 218–238, and 244–264; these read MDWF…FLPI, QGLA…MMYY, LKLG…GFLG, ALVI…SDAF, LGVA…IPGT, SFLL…KDLI, MMAL…VFFI, and VGML…LFWL.

The protein belongs to the UppP family.

The protein localises to the cell inner membrane. The catalysed reaction is di-trans,octa-cis-undecaprenyl diphosphate + H2O = di-trans,octa-cis-undecaprenyl phosphate + phosphate + H(+). Catalyzes the dephosphorylation of undecaprenyl diphosphate (UPP). Confers resistance to bacitracin. The chain is Undecaprenyl-diphosphatase from Alcanivorax borkumensis (strain ATCC 700651 / DSM 11573 / NCIMB 13689 / SK2).